We begin with the raw amino-acid sequence, 259 residues long: Probable dihydroorotate dehydrogenase B (NAD(+)), electron transfer subunit (259 aa).

The FAD-binding FR-type domain occupies 1-89 (MLPLNATITQ…RGPFGKGFTL (89 aa)). [2Fe-2S] cluster contacts are provided by cysteine 211, cysteine 216, cysteine 219, and cysteine 229.

Belongs to the PyrK family. In terms of assembly, heterotetramer of 2 PyrK and 2 PyrD type B subunits. The cofactor is [2Fe-2S] cluster. Requires FAD as cofactor.

Its pathway is pyrimidine metabolism; UMP biosynthesis via de novo pathway; orotate from (S)-dihydroorotate (NAD(+) route): step 1/1. In terms of biological role, responsible for channeling the electrons from the oxidation of dihydroorotate from the FMN redox center in the PyrD type B subunit to the ultimate electron acceptor NAD(+). In Methanosarcina mazei (strain ATCC BAA-159 / DSM 3647 / Goe1 / Go1 / JCM 11833 / OCM 88) (Methanosarcina frisia), this protein is Probable dihydroorotate dehydrogenase B (NAD(+)), electron transfer subunit.